The chain runs to 343 residues: Delta(1)-pyrroline-2-carboxylate/Delta(1)-piperideine-2-carboxylate reductase (343 aa).

S53 functions as the Charge relay system in the catalytic mechanism. The active-site Proton donor is H54. Residue R58 participates in substrate binding. 126–130 (HFAAL) contributes to the NADP(+) binding site. T166 provides a ligand contact to substrate. An NADP(+)-binding site is contributed by 184–186 (DLA). 192–193 (HG) lines the substrate pocket. D194 functions as the Charge relay system in the catalytic mechanism. Residues 236-237 (HK) and 309-315 (RLPGDRR) each bind NADP(+).

This sequence belongs to the LDH2/MDH2 oxidoreductase family. As to quaternary structure, homodimer.

The catalysed reaction is L-pipecolate + NADP(+) = Delta(1)-piperideine-2-carboxylate + NADPH + H(+). It carries out the reaction L-proline + NADP(+) = 1-pyrroline-2-carboxylate + NADPH + H(+). The enzyme catalyses N-methyl-L-alanine + NADP(+) + H2O = methylamine + pyruvate + NADPH + H(+). With respect to regulation, is inhibited by the substrate analog pyrrole-2-carboxylate, and by 2-picolinate. Functionally, catalyzes the reduction of both Delta(1)-pyrroline-2-carboxylate (Pyr2C) and Delta(1)-piperideine-2-carboxylate (Pip2C) to L-proline and L-pipecolate, respectively, using NADPH as the electron donor. Can catalyze the reverse oxidation reactions, albeit at a much lower rate. Is also able to catalyze in vitro the NADPH-dependent formation of N-methylalanine from pyruvate and N-methylamine; can act on other alpha-keto acids and specifically uses methylamine and not ammonia for these reductive amination reactions. Can use NADH instead of NADPH, although with much less efficiency. The chain is Delta(1)-pyrroline-2-carboxylate/Delta(1)-piperideine-2-carboxylate reductase from Pseudomonas syringae pv. tomato.